A 245-amino-acid chain; its full sequence is Demethylmenaquinone methyltransferase (245 aa).

Residues threonine 58, aspartate 79, and 106-107 (NA) each bind S-adenosyl-L-methionine.

The protein belongs to the class I-like SAM-binding methyltransferase superfamily. MenG/UbiE family.

The enzyme catalyses a 2-demethylmenaquinol + S-adenosyl-L-methionine = a menaquinol + S-adenosyl-L-homocysteine + H(+). It participates in quinol/quinone metabolism; menaquinone biosynthesis; menaquinol from 1,4-dihydroxy-2-naphthoate: step 2/2. In terms of biological role, methyltransferase required for the conversion of demethylmenaquinol (DMKH2) to menaquinol (MKH2). This is Demethylmenaquinone methyltransferase from Halalkalibacterium halodurans (strain ATCC BAA-125 / DSM 18197 / FERM 7344 / JCM 9153 / C-125) (Bacillus halodurans).